The primary structure comprises 140 residues: Large ribosomal subunit protein bL17 (140 aa).

Residues glutamate 120–alanine 140 form a disordered region.

This sequence belongs to the bacterial ribosomal protein bL17 family. In terms of assembly, part of the 50S ribosomal subunit. Contacts protein L32.

This Erythrobacter litoralis (strain HTCC2594) protein is Large ribosomal subunit protein bL17.